Here is a 166-residue protein sequence, read N- to C-terminus: MSGIAAGRLAEERKHWRKDHPFGFIAKPVKNADGTLNLFNWECAIPGRKDTIWEGGLYRIRMLFKDDFPSTPPKCKFEPPLFHPNVYPSGTVCLSLLDENKDWKPSISIKQLLIGIQDLLNHPNIEDPAQAEAYQIYCQNRAEYEKRVKKEAVKYAAELVQKQMLE.

The 154-residue stretch at 4-157 (IAAGRLAEER…VKKEAVKYAA (154 aa)) folds into the UBC core domain. Residue Cys-93 is the Glycyl thioester intermediate of the active site.

It belongs to the ubiquitin-conjugating enzyme family. As to quaternary structure, interacts with brd-1 and rad-51. Interacts with smo-1 and sop-2. Interacts with bet-1 (via BROMO domain 2). Interacts with isoforms 1 and 2 of X-box-binding protein xbp-1.

Its subcellular location is the nucleus envelope. The protein operates within protein modification; protein sumoylation. Its function is as follows. Accepts the ubiquitin-like protein smo-1 from the aos-1-uba-2 E1 complex and catalyzes its covalent attachment to other proteins with the help of an E3 ligase such as gei-17. Required to sumoylate the ETS transcription factor lin-1, Polycomb protein sop-2, and intermediate filament proteins, such as ifb-1. Required for embryonic development, fertility, vulval morphogenesis, inhibition of vulval cell fates, lifespan, and neuromuscular activity. This is SUMO-conjugating enzyme UBC9 from Caenorhabditis elegans.